Here is a 243-residue protein sequence, read N- to C-terminus: Carboxy-S-adenosyl-L-methionine synthase (243 aa).

Residues Y40, G65–S67, D90–N91, D118–I119, N133, and R200 contribute to the S-adenosyl-L-methionine site.

This sequence belongs to the class I-like SAM-binding methyltransferase superfamily. Cx-SAM synthase family. Homodimer.

The catalysed reaction is prephenate + S-adenosyl-L-methionine = carboxy-S-adenosyl-L-methionine + 3-phenylpyruvate + H2O. Functionally, catalyzes the conversion of S-adenosyl-L-methionine (SAM) to carboxy-S-adenosyl-L-methionine (Cx-SAM). The chain is Carboxy-S-adenosyl-L-methionine synthase from Shewanella putrefaciens (strain CN-32 / ATCC BAA-453).